The chain runs to 216 residues: NADH-quinone oxidoreductase subunit C (216 aa).

It belongs to the complex I 30 kDa subunit family. In terms of assembly, NDH-1 is composed of 14 different subunits. Subunits NuoB, C, D, E, F, and G constitute the peripheral sector of the complex.

It is found in the cell inner membrane. The enzyme catalyses a quinone + NADH + 5 H(+)(in) = a quinol + NAD(+) + 4 H(+)(out). NDH-1 shuttles electrons from NADH, via FMN and iron-sulfur (Fe-S) centers, to quinones in the respiratory chain. The immediate electron acceptor for the enzyme in this species is believed to be ubiquinone. Couples the redox reaction to proton translocation (for every two electrons transferred, four hydrogen ions are translocated across the cytoplasmic membrane), and thus conserves the redox energy in a proton gradient. The sequence is that of NADH-quinone oxidoreductase subunit C from Francisella tularensis subsp. holarctica (strain FTNF002-00 / FTA).